We begin with the raw amino-acid sequence, 399 residues long: Phosphate acyltransferase (399 aa).

Belongs to the PlsX family. In terms of assembly, homodimer. Probably interacts with PlsY.

It localises to the cytoplasm. It catalyses the reaction a fatty acyl-[ACP] + phosphate = an acyl phosphate + holo-[ACP]. It participates in lipid metabolism; phospholipid metabolism. Functionally, catalyzes the reversible formation of acyl-phosphate (acyl-PO(4)) from acyl-[acyl-carrier-protein] (acyl-ACP). This enzyme utilizes acyl-ACP as fatty acyl donor, but not acyl-CoA. This is Phosphate acyltransferase from Rhodobacter capsulatus (Rhodopseudomonas capsulata).